A 306-amino-acid chain; its full sequence is IN2-2 protein (306 aa).

Catalysis depends on Y64, which acts as the Proton donor. H131 contacts substrate. 210–220 (SPLGRGFFSSG) contributes to the NADP(+) binding site. The interval 272–306 (LGSPPRKRRLPHTWHNKNRQLQPERGGTVCEAYTG) is disordered. Residues 276–289 (PRKRRLPHTWHNKN) show a composition bias toward basic residues.

The protein belongs to the aldo/keto reductase family. Aldo/keto reductase 2 subfamily. Leaves and roots.

The chain is IN2-2 protein (IN2-2) from Zea mays (Maize).